We begin with the raw amino-acid sequence, 94 residues long: Large ribosomal subunit protein uL29 (94 aa).

A disordered region spans residues 66–94 (NPGERKSRVLSRAKRKKKNLARLSAKVKG). The span at 73 to 94 (RVLSRAKRKKKNLARLSAKVKG) shows a compositional bias: basic residues.

Belongs to the universal ribosomal protein uL29 family.

The polypeptide is Large ribosomal subunit protein uL29 (Leptospira borgpetersenii serovar Hardjo-bovis (strain JB197)).